Here is a 282-residue protein sequence, read N- to C-terminus: Pyrroline-5-carboxylate reductase (282 aa).

Belongs to the pyrroline-5-carboxylate reductase family.

It carries out the reaction L-proline + NADP(+) = (S)-1-pyrroline-5-carboxylate + NADPH + 2 H(+). The enzyme catalyses L-proline + NAD(+) = (S)-1-pyrroline-5-carboxylate + NADH + 2 H(+). It participates in amino-acid biosynthesis; L-proline biosynthesis; L-proline from L-glutamate 5-semialdehyde: step 1/1. The polypeptide is Pyrroline-5-carboxylate reductase (pro3) (Schizosaccharomyces pombe (strain 972 / ATCC 24843) (Fission yeast)).